The primary structure comprises 157 residues: 2-C-methyl-D-erythritol 2,4-cyclodiphosphate synthase (157 aa).

A divalent metal cation contacts are provided by Asp8 and His10. Residues 8-10 (DVH) and 34-35 (HS) each bind 4-CDP-2-C-methyl-D-erythritol 2-phosphate. Residue His42 coordinates a divalent metal cation. Residues 56-58 (DIG), 61-65 (FPDTD), 100-106 (AQAPKMA), 132-135 (TTTE), Phe139, and Arg142 each bind 4-CDP-2-C-methyl-D-erythritol 2-phosphate.

The protein belongs to the IspF family. In terms of assembly, homotrimer. A divalent metal cation serves as cofactor.

The catalysed reaction is 4-CDP-2-C-methyl-D-erythritol 2-phosphate = 2-C-methyl-D-erythritol 2,4-cyclic diphosphate + CMP. Its pathway is isoprenoid biosynthesis; isopentenyl diphosphate biosynthesis via DXP pathway; isopentenyl diphosphate from 1-deoxy-D-xylulose 5-phosphate: step 4/6. Its function is as follows. Involved in the biosynthesis of isopentenyl diphosphate (IPP) and dimethylallyl diphosphate (DMAPP), two major building blocks of isoprenoid compounds. Catalyzes the conversion of 4-diphosphocytidyl-2-C-methyl-D-erythritol 2-phosphate (CDP-ME2P) to 2-C-methyl-D-erythritol 2,4-cyclodiphosphate (ME-CPP) with a corresponding release of cytidine 5-monophosphate (CMP). This is 2-C-methyl-D-erythritol 2,4-cyclodiphosphate synthase from Edwardsiella ictaluri (strain 93-146).